The sequence spans 358 residues: Phosphoribosylformylglycinamidine cyclo-ligase (358 aa).

The protein belongs to the AIR synthase family.

The protein localises to the cytoplasm. The enzyme catalyses 2-formamido-N(1)-(5-O-phospho-beta-D-ribosyl)acetamidine + ATP = 5-amino-1-(5-phospho-beta-D-ribosyl)imidazole + ADP + phosphate + H(+). The protein operates within purine metabolism; IMP biosynthesis via de novo pathway; 5-amino-1-(5-phospho-D-ribosyl)imidazole from N(2)-formyl-N(1)-(5-phospho-D-ribosyl)glycinamide: step 2/2. This chain is Phosphoribosylformylglycinamidine cyclo-ligase, found in Nitrosococcus oceani (strain ATCC 19707 / BCRC 17464 / JCM 30415 / NCIMB 11848 / C-107).